The following is a 184-amino-acid chain: Elongation factor P (184 aa).

This sequence belongs to the elongation factor P family.

Its subcellular location is the cytoplasm. It participates in protein biosynthesis; polypeptide chain elongation. In terms of biological role, involved in peptide bond synthesis. Stimulates efficient translation and peptide-bond synthesis on native or reconstituted 70S ribosomes in vitro. Probably functions indirectly by altering the affinity of the ribosome for aminoacyl-tRNA, thus increasing their reactivity as acceptors for peptidyl transferase. This chain is Elongation factor P, found in Variovorax paradoxus (strain S110).